A 618-amino-acid chain; its full sequence is Glucose starvation modulator protein 1 (618 aa).

The segment at residues C20–C48 is a DNA-binding region (zn(2)-C6 fungal-type). Positions A325–K353 are disordered. A compositionally biased stretch (basic and acidic residues) spans A335–K353. Positions L466–G538 constitute a PAS domain.

It belongs to the ERT1/acuK family.

Its subcellular location is the nucleus. Its function is as follows. Transcription factor which regulates nonfermentable carbon utilization. Binds specifically to 5'-CGGN(8)CGG-3' and 5'-CGGN(9)CGG-3' sequences in the promoter region. The sequence is that of Glucose starvation modulator protein 1 (GSM1) from Saccharomyces cerevisiae (strain JAY291) (Baker's yeast).